We begin with the raw amino-acid sequence, 308 residues long: Pantothenate synthetase (308 aa).

Residue 39-46 coordinates ATP; sequence MGALHDGH. Residue H46 is the Proton donor of the active site. Residue Q71 participates in (R)-pantoate binding. Residue Q71 coordinates beta-alanine. 157 to 160 contributes to the ATP binding site; it reads GEKD. Q163 lines the (R)-pantoate pocket. Residues V186 and 194–197 contribute to the ATP site; that span reads MSSR. The tract at residues 286–308 is disordered; it reads IETPAGTAGPDGDRQYAQSPWRN.

The protein belongs to the pantothenate synthetase family. In terms of assembly, homodimer.

The protein resides in the cytoplasm. It carries out the reaction (R)-pantoate + beta-alanine + ATP = (R)-pantothenate + AMP + diphosphate + H(+). Its pathway is cofactor biosynthesis; (R)-pantothenate biosynthesis; (R)-pantothenate from (R)-pantoate and beta-alanine: step 1/1. In terms of biological role, catalyzes the condensation of pantoate with beta-alanine in an ATP-dependent reaction via a pantoyl-adenylate intermediate. This Mycobacterium avium (strain 104) protein is Pantothenate synthetase.